The sequence spans 269 residues: Surfeit locus protein 4 (269 aa).

The next 5 membrane-spanning stretches (helical) occupy residues 64 to 84, 92 to 112, 179 to 199, 203 to 223, and 242 to 262; these read FLATCFVIINLIGQIGGCVLV, YACFGLFCIIALQTVAYSILW, FFSILQNMVGTALIILVAVGF, LAALTLVVWLLAINVYFNAFW, and TTSVIGGLLLVVALGPGGVSM. A Di-lysine motif motif is present at residues 266–269; the sequence is KKEW.

Belongs to the SURF4 family.

It is found in the endoplasmic reticulum membrane. It localises to the endoplasmic reticulum-Golgi intermediate compartment membrane. Its subcellular location is the golgi apparatus membrane. In terms of biological role, endoplasmic reticulum cargo receptor that mediates the export of lipoproteins by recruiting cargos into COPII vesicles to facilitate their secretion. In Danio rerio (Zebrafish), this protein is Surfeit locus protein 4.